Reading from the N-terminus, the 299-residue chain is Ophiobolin family sesterterpenoid biosynthesis cluster acetyltransferase (299 aa).

The signal sequence occupies residues methionine 1–glycine 20. N-linked (GlcNAc...) asparagine glycosylation is found at asparagine 28, asparagine 58, asparagine 77, asparagine 126, asparagine 177, asparagine 212, and asparagine 282.

This sequence belongs to the bfoA family.

It participates in secondary metabolite biosynthesis; terpenoid biosynthesis. Its function is as follows. Acetyltransferase; part of the gene cluster that mediates the biosynthesis of an ophiobolin family sesterterpenoid. Sesterterpenoid synthase; part of the gene cluster that mediates the biosynthesis of an ophiobolin family sesterterpenoid. The sequence is that of Ophiobolin family sesterterpenoid biosynthesis cluster acetyltransferase from Aspergillus terreus.